A 158-amino-acid polypeptide reads, in one-letter code: Transcription antitermination protein NusB (158 aa).

Residues M1 to K13 show a composition bias toward polar residues. The disordered stretch occupies residues M1–R24.

It belongs to the NusB family.

Functionally, involved in transcription antitermination. Required for transcription of ribosomal RNA (rRNA) genes. Binds specifically to the boxA antiterminator sequence of the ribosomal RNA (rrn) operons. This is Transcription antitermination protein NusB from Marinobacter nauticus (strain ATCC 700491 / DSM 11845 / VT8) (Marinobacter aquaeolei).